A 369-amino-acid polypeptide reads, in one-letter code: uncharacterized protein (369 aa).

A run of 9 helical transmembrane segments spans residues 25-45 (QFVA…WYDW), 47-67 (FCLL…FVPA), 119-139 (LNIV…FNLM), 152-172 (LSGF…FSAL), 206-226 (HALN…LLFV), 235-255 (LKPL…SLYL), 272-292 (PIAL…GVFG), 296-316 (FGIY…TVFL), and 323-343 (LIFF…FTVA).

The protein to B.subtilis ComEC.

Its subcellular location is the cell membrane. This is an uncharacterized protein from Mycoplasma genitalium (strain ATCC 33530 / DSM 19775 / NCTC 10195 / G37) (Mycoplasmoides genitalium).